A 274-amino-acid chain; its full sequence is NH(3)-dependent NAD(+) synthetase (274 aa).

Residue 46–53 coordinates ATP; the sequence is GISGGQDS. Aspartate 52 lines the Mg(2+) pocket. A deamido-NAD(+)-binding site is contributed by arginine 140. Threonine 160 contacts ATP. A Mg(2+)-binding site is contributed by glutamate 165. The deamido-NAD(+) site is built by lysine 173 and aspartate 180. Lysine 189 and threonine 211 together coordinate ATP. Deamido-NAD(+) is bound at residue 260-261; that stretch reads HK.

Belongs to the NAD synthetase family. As to quaternary structure, homodimer.

The catalysed reaction is deamido-NAD(+) + NH4(+) + ATP = AMP + diphosphate + NAD(+) + H(+). It participates in cofactor biosynthesis; NAD(+) biosynthesis; NAD(+) from deamido-NAD(+) (ammonia route): step 1/1. Catalyzes the ATP-dependent amidation of deamido-NAD to form NAD. Uses ammonia as a nitrogen source. The sequence is that of NH(3)-dependent NAD(+) synthetase from Listeria monocytogenes serovar 1/2a (strain ATCC BAA-679 / EGD-e).